An 87-amino-acid chain; its full sequence is Putative acyl-CoA-binding protein (87 aa).

Residues 1 to 86 enclose the ACB domain; sequence MSSTFEQAAA…VDELKTKYGM (86 aa). An acyl-CoA-binding positions include lysine 13, 28–32, lysine 50, lysine 54, and tyrosine 73; that span reads YALFK.

The protein belongs to the ACBP family.

It localises to the cytoplasm. It is found in the nucleus. In terms of biological role, binds medium- and long-chain acyl-CoA esters with very high affinity and may function as an intracellular carrier of acyl-CoA esters. May enhance the activity of the ceramide synthase complex. The polypeptide is Putative acyl-CoA-binding protein (Schizosaccharomyces pombe (strain 972 / ATCC 24843) (Fission yeast)).